A 788-amino-acid chain; its full sequence is IQ motif and ubiquitin-like domain-containing protein (788 aa).

Residues 1–89 (MSDPEEERVA…SLGSASGSQD (89 aa)) are disordered. Over residues 7–20 (ERVADSTAHYEEAG) the composition is skewed to basic and acidic residues. Acidic residues predominate over residues 31-54 (EAEGSDVMPEQDDEVQELTTESEE). The span at 68 to 78 (KSDDSKPREEV) shows a compositional bias: basic and acidic residues. Residues 80 to 89 (SLGSASGSQD) are compositionally biased toward polar residues. Residues 127-203 (ATVKIVLIPA…VQVEVFSTLP (77 aa)) enclose the Ubiquitin-like domain. An IQ domain is found at 334 to 363 (RLHAVIVIQTSYRRWHAKRYVESLRKQKKL).

Component of the axonemal radial spoke 1 (RS1) complex, at least composed of spoke head proteins RSPH1, RSPH3B, RSPH9 and the cilia-specific component RSPH4A or sperm-specific component RSPH6A, spoke stalk proteins RSPH14, DNAJB13, DYDC1, ROPN1L and NME5, and the anchor protein IQUB. Does not appear to be part of radial spoke complexes 2 or 3 (RS2 or RS3). Interacts with CALM1. Interacts with DNAJB13. Interacts with DYNLL2. Interacts with NME5. Interacts with RSPH3. Interacts with RSPH9. Interacts with ZMYND10. Interacts with calmodulin; the interaction occurs in conditions of low but not high calcium. In terms of tissue distribution, expressed in the flagellum of sperm cells and cilia of tracheal epithelial cells (at protein level). High expression in testis, also present in brain and lung.

Its subcellular location is the cytoplasm. It localises to the cytoskeleton. The protein resides in the flagellum axoneme. It is found in the cell projection. The protein localises to the cilium. Its function is as follows. Anchors the radial spoke 1 (RS1) complex to the A microtubule of outer doublet microtubules in axonemes. The triple radial spokes (RS1, RS2 and RS3) are required to modulate beating of the sperm flagellum. May play a role in inhibiting signaling via MAPK1/ERK2 and MAPK3/ERK1. Additionally, may play a role in the functioning of cilia. Not required for the functioning of tracheal or ependymal cilia. In Mus musculus (Mouse), this protein is IQ motif and ubiquitin-like domain-containing protein (Iqub).